We begin with the raw amino-acid sequence, 228 residues long: Claudin-10 (228 aa).

A helical membrane pass occupies residues 1 to 21 (MASTASEIIAFMVSISGWVLV). Topologically, residues 22-80 (SSTLPTDYWKVSTIDGTVITTATYWANLWKACVTDSTGVSNCKDFPSMLALDGYIQACR) are extracellular. Residues 81–101 (GLMIAAVSLGFFGSIFALFGM) form a helical membrane-spanning segment. Residues 102 to 115 (KCTKVGGSDKAKAK) are Cytoplasmic-facing. A helical membrane pass occupies residues 116–136 (IACLAGIVFILSGLCSMTGCS). The Extracellular segment spans residues 137–160 (LYANKITTEFFDPLFVEQKYELGA). The chain crosses the membrane as a helical span at residues 161-181 (ALFIGWAGASLCIIGGVIFCF). Over 182 to 228 (SISDNNKTPRYAYNGATSVMSSRTKYHGGEDFKTTNPSKQFDKNAYV) the chain is Cytoplasmic.

It belongs to the claudin family. Can form homodimers both in trans (interaction between CLDN10 molecules in opposing membranes) and in cis (interaction between CLDN10 molecules within one membrane). Interacts with CLDN19.

It localises to the cell junction. Its subcellular location is the tight junction. The protein resides in the cell membrane. The catalysed reaction is Na(+)(in) = Na(+)(out). The enzyme catalyses Li(+)(in) = Li(+)(out). It carries out the reaction K(+)(in) = K(+)(out). It catalyses the reaction Rb(+)(in) = Rb(+)(out). The catalysed reaction is Cs(+)(in) = Cs(+)(out). The enzyme catalyses NH4(+)(in) = NH4(+)(out). It carries out the reaction methylamine(out) = methylamine(in). It catalyses the reaction Mg(2+)(in) = Mg(2+)(out). The catalysed reaction is Ca(2+)(in) = Ca(2+)(out). The enzyme catalyses Sr(2+)(in) = Sr(2+)(out). It carries out the reaction chloride(in) = chloride(out). It catalyses the reaction nitrate(in) = nitrate(out). Functionally, forms paracellular channels: polymerizes in tight junction strands with cation- and anion-selective channels through the strands, conveying epithelial permeability in a process known as paracellular tight junction permeability. In sweat glands and in the thick ascending limb (TAL) of Henle's loop in kidney, it controls paracellular sodium permeability which is essential for proper sweat production and renal function. In renal proximal tubules, it conveys selective chloride over hydrogencarbonate anion permeability which is required for renal chloride reabsorption and salt homeostasis. This is Claudin-10 (CLDN10) from Pongo abelii (Sumatran orangutan).